The primary structure comprises 387 residues: MNLHEYQAKDLLESYGLKVQKGIVAHNPNEAAQAFDQLGGKFAVIKAQVHAGGRGKAGGVKVVKSSQEAREVAESLIGKNLVTFQTDAEGQPVNSVGIFEDVYPVTRELYLGAVVDRSSRKVTFMASTEGGVDIEEVAHNSPEKILKVEVDPLVGLQPFQAREVAFKLGLEGKQINDFVKTMLGAYKAFIECDFALFEINPLAVRENGEIVCVDGKINLDSNALYRHPKLLALRDKSQENAKELKASEHELNYVALEGNIGCMVNGAGLAMATMDIIQLYGGKPANFLDVGGGATKERVIEAFKLILDDENVKAVLINIFGGIVRCDMIAEAIIEAVKEVNVTVPVVVRLEGNNAEKGAKILADSGLKLIPADGLADAADKVVKSLG.

An ATP-grasp domain is found at 9-245 (KDLLESYGLK…KSQENAKELK (237 aa)). ATP contacts are provided by residues K46, 53-55 (GRG), E100, Y103, and E108. The Mg(2+) site is built by N200 and D214. Residues N265 and 322–324 (GIV) contribute to the substrate site.

Belongs to the succinate/malate CoA ligase beta subunit family. As to quaternary structure, heterotetramer of two alpha and two beta subunits. It depends on Mg(2+) as a cofactor.

It catalyses the reaction succinate + ATP + CoA = succinyl-CoA + ADP + phosphate. The enzyme catalyses GTP + succinate + CoA = succinyl-CoA + GDP + phosphate. Its pathway is carbohydrate metabolism; tricarboxylic acid cycle; succinate from succinyl-CoA (ligase route): step 1/1. Its function is as follows. Succinyl-CoA synthetase functions in the citric acid cycle (TCA), coupling the hydrolysis of succinyl-CoA to the synthesis of either ATP or GTP and thus represents the only step of substrate-level phosphorylation in the TCA. The beta subunit provides nucleotide specificity of the enzyme and binds the substrate succinate, while the binding sites for coenzyme A and phosphate are found in the alpha subunit. This is Succinate--CoA ligase [ADP-forming] subunit beta from Francisella tularensis subsp. holarctica (strain OSU18).